The primary structure comprises 336 residues: CENP-A histone chaperone scm3 (336 aa).

The disordered stretch occupies residues 243–269; the sequence is RRRNPLLSSPKTPLRRSFSKSKVRNSN. The segment covering 255–269 has biased composition (basic residues); the sequence is PLRRSFSKSKVRNSN.

It localises to the cytoplasm. It is found in the nucleus. Functionally, centromeric protein that plays a central role in the incorporation and maintenance of histone H3-like variant CENPA at centromeres. The protein is CENP-A histone chaperone scm3 of Schizosaccharomyces pombe (strain 972 / ATCC 24843) (Fission yeast).